A 480-amino-acid chain; its full sequence is Ribulose bisphosphate carboxylase large chain (480 aa).

The propeptide occupies Met1–Ser2. An N-acetylproline modification is found at Pro3. Lys14 carries the post-translational modification N6,N6,N6-trimethyllysine. Substrate contacts are provided by Asn123 and Thr173. The active-site Proton acceptor is Lys175. Lys177 contributes to the substrate binding site. Positions 201, 203, and 204 each coordinate Mg(2+). At Lys201 the chain carries N6-carboxylysine. The active-site Proton acceptor is the His294. Residues Arg295, His327, and Ser379 each contribute to the substrate site.

The protein belongs to the RuBisCO large chain family. Type I subfamily. In terms of assembly, heterohexadecamer of 8 large chains and 8 small chains; disulfide-linked. The disulfide link is formed within the large subunit homodimers. Mg(2+) is required as a cofactor. In terms of processing, the disulfide bond which can form in the large chain dimeric partners within the hexadecamer appears to be associated with oxidative stress and protein turnover.

Its subcellular location is the plastid. The protein resides in the chloroplast. The catalysed reaction is 2 (2R)-3-phosphoglycerate + 2 H(+) = D-ribulose 1,5-bisphosphate + CO2 + H2O. It carries out the reaction D-ribulose 1,5-bisphosphate + O2 = 2-phosphoglycolate + (2R)-3-phosphoglycerate + 2 H(+). RuBisCO catalyzes two reactions: the carboxylation of D-ribulose 1,5-bisphosphate, the primary event in carbon dioxide fixation, as well as the oxidative fragmentation of the pentose substrate in the photorespiration process. Both reactions occur simultaneously and in competition at the same active site. This chain is Ribulose bisphosphate carboxylase large chain, found in Alluaudia procera (Madagascan ocotillo).